A 349-amino-acid polypeptide reads, in one-letter code: Aspartate-semialdehyde dehydrogenase (349 aa).

NADP(+) contacts are provided by residues 12–15 (TGSV) and 39–40 (NS). Arg113 serves as a coordination point for phosphate. The active-site Acyl-thioester intermediate is Cys148. Position 175 (Gln175) interacts with substrate. An NADP(+)-binding site is contributed by 178–179 (SG). Glu201 provides a ligand contact to substrate. Lys204 is a binding site for phosphate. Position 234 (Arg234) interacts with substrate. His241 functions as the Proton acceptor in the catalytic mechanism. Position 326–327 (326–327 (NT)) interacts with NADP(+).

This sequence belongs to the aspartate-semialdehyde dehydrogenase family. As to quaternary structure, homodimer.

The enzyme catalyses L-aspartate 4-semialdehyde + phosphate + NADP(+) = 4-phospho-L-aspartate + NADPH + H(+). It participates in amino-acid biosynthesis; L-lysine biosynthesis via DAP pathway; (S)-tetrahydrodipicolinate from L-aspartate: step 2/4. Its pathway is amino-acid biosynthesis; L-methionine biosynthesis via de novo pathway; L-homoserine from L-aspartate: step 2/3. The protein operates within amino-acid biosynthesis; L-threonine biosynthesis; L-threonine from L-aspartate: step 2/5. Catalyzes the NADPH-dependent formation of L-aspartate-semialdehyde (L-ASA) by the reductive dephosphorylation of L-aspartyl-4-phosphate. The polypeptide is Aspartate-semialdehyde dehydrogenase (Leptospira interrogans serogroup Icterohaemorrhagiae serovar copenhageni (strain Fiocruz L1-130)).